The sequence spans 746 residues: 1,4-alpha-glucan branching enzyme GlgB (746 aa).

Asp-418 functions as the Nucleophile in the catalytic mechanism. Glu-471 serves as the catalytic Proton donor.

It belongs to the glycosyl hydrolase 13 family. GlgB subfamily. As to quaternary structure, monomer.

It catalyses the reaction Transfers a segment of a (1-&gt;4)-alpha-D-glucan chain to a primary hydroxy group in a similar glucan chain.. The protein operates within glycan biosynthesis; glycogen biosynthesis. In terms of biological role, catalyzes the formation of the alpha-1,6-glucosidic linkages in glycogen by scission of a 1,4-alpha-linked oligosaccharide from growing alpha-1,4-glucan chains and the subsequent attachment of the oligosaccharide to the alpha-1,6 position. This is 1,4-alpha-glucan branching enzyme GlgB from Nitrosospira multiformis (strain ATCC 25196 / NCIMB 11849 / C 71).